We begin with the raw amino-acid sequence, 508 residues long: Glycerol kinase (508 aa).

Residue T14 participates in ADP binding. ATP-binding residues include T14, T15, and S16. T14 contributes to the sn-glycerol 3-phosphate binding site. R18 lines the ADP pocket. Sn-glycerol 3-phosphate contacts are provided by R84, E85, and Y136. Positions 84, 85, and 136 each coordinate glycerol. H232 is subject to Phosphohistidine; by HPr. D246 is a sn-glycerol 3-phosphate binding site. Residues D246 and Q247 each coordinate glycerol. ADP is bound by residues T268 and G311. ATP-binding residues include T268, G311, Q315, and G412. Positions 412 and 416 each coordinate ADP.

It belongs to the FGGY kinase family. As to quaternary structure, homotetramer and homodimer (in equilibrium). Post-translationally, the phosphoenolpyruvate-dependent sugar phosphotransferase system (PTS), including enzyme I, and histidine-containing protein (HPr) are required for the phosphorylation, which leads to the activation of the enzyme.

It catalyses the reaction glycerol + ATP = sn-glycerol 3-phosphate + ADP + H(+). It participates in polyol metabolism; glycerol degradation via glycerol kinase pathway; sn-glycerol 3-phosphate from glycerol: step 1/1. With respect to regulation, activated by phosphorylation and inhibited by fructose 1,6-bisphosphate (FBP). Functionally, key enzyme in the regulation of glycerol uptake and metabolism. Catalyzes the phosphorylation of glycerol to yield sn-glycerol 3-phosphate. This chain is Glycerol kinase, found in Streptococcus pyogenes serotype M4 (strain MGAS10750).